We begin with the raw amino-acid sequence, 226 residues long: PtdIns3K complex I subunit atg38 (226 aa).

The residue at position 2 (S2) is an N-acetylserine. Coiled-coil stretches lie at residues 52 to 85 (DVTQ…ENNI) and 182 to 209 (FKEY…LRER).

Belongs to the ATG38 family. In terms of assembly, homodimer. Component of the autophagy-specific VPS34 PI3-kinase complex I composed of VPS15, VPS30, VPS34, ATG14 and an ATG38 homodimer. Interacts directly with ATG14 and VPS34.

It localises to the cytoplasm. The protein localises to the preautophagosomal structure membrane. Functionally, autophagy-related protein required for cytoplasm to vacuole transport (Cvt) and autophagy as a part of the autophagy-specific VPS34 PI3-kinase complex I. This complex is essential to recruit the ATG8-phosphatidylinositol conjugate and the ATG12-ATG5 conjugate to the pre-autophagosomal structure. ATG38 is required for the integrity of the active PI3-kinase complex I by maintaining an association between VPS15-VPS34 and ATG14-VPS30 subcomplexes. In Saccharomyces cerevisiae (strain ATCC 204508 / S288c) (Baker's yeast), this protein is PtdIns3K complex I subunit atg38.